Consider the following 734-residue polypeptide: Photosystem I P700 chlorophyll a apoprotein A2 (734 aa).

8 helical membrane passes run 46–69, 135–158, 175–199, 273–291, 330–353, 369–395, 417–439, and 517–535; these read IFAS…FHVA, LYGG…LHLQ, LNHH…HVAI, MAHH…GHMY, LHFQ…QHMY, AALY…IFFI, AIIS…LYVH, and FLVH…LILV. The [4Fe-4S] cluster site is built by cysteine 559 and cysteine 568. Transmembrane regions (helical) follow at residues 575–596 and 643–665; these read AFYL…YWHW and LSVW…MFLI. Chlorophyll a is bound by residues histidine 654, methionine 662, and tyrosine 670. A phylloquinone-binding site is contributed by tryptophan 671. The helical transmembrane segment at 707–727 threads the bilayer; that stretch reads LVGLAHFSVGYIFTYAAFLIA.

This sequence belongs to the PsaA/PsaB family. The PsaA/B heterodimer binds the P700 chlorophyll special pair and subsequent electron acceptors. PSI consists of a core antenna complex that captures photons, and an electron transfer chain that converts photonic excitation into a charge separation. The eukaryotic PSI reaction center is composed of at least 11 subunits. P700 is a chlorophyll a/chlorophyll a' dimer, A0 is one or more chlorophyll a, A1 is one or both phylloquinones and FX is a shared 4Fe-4S iron-sulfur center. serves as cofactor.

It is found in the plastid. The protein resides in the chloroplast thylakoid membrane. The catalysed reaction is reduced [plastocyanin] + hnu + oxidized [2Fe-2S]-[ferredoxin] = oxidized [plastocyanin] + reduced [2Fe-2S]-[ferredoxin]. Its function is as follows. PsaA and PsaB bind P700, the primary electron donor of photosystem I (PSI), as well as the electron acceptors A0, A1 and FX. PSI is a plastocyanin-ferredoxin oxidoreductase, converting photonic excitation into a charge separation, which transfers an electron from the donor P700 chlorophyll pair to the spectroscopically characterized acceptors A0, A1, FX, FA and FB in turn. Oxidized P700 is reduced on the lumenal side of the thylakoid membrane by plastocyanin. The polypeptide is Photosystem I P700 chlorophyll a apoprotein A2 (Physcomitrium patens (Spreading-leaved earth moss)).